The following is a 952-amino-acid chain: MDLRVGQRPPVEPPPEPTLLALQRPQRLHHHLFLAGLQQQRSVEPMRLSMDTPMPELQVGPQEQELRQLLHKDKSKRSAVASSVVKQKLAEVILKKQQAALERTVHPNSPGIPYRTLEPLETEGATRSMLSSFLPPVPSLPSDPPEHFPLRKTVSEPNLKLRYKPKKSLERRKNPLLRKESAPPSLRRRPAETLGDSSPSSSSTPASGCSSPNDSEHGPNPILGSEALLGQRLRLQETSVAPFALPTVSLLPAITLGLPAPARADSDRRTHPTLGPRGPILGSPHTPLFLPHGLEPEAGGTLPSRLQPILLLDPSGSHAPLLTVPGLGPLPFHFAQSLMTTERLSGSGLHWPLSRTRSEPLPPSATAPPPPGPMQPRLEQLKTHVQVIKRSAKPSEKPRLRQIPSAEDLETDGGGPGQVVDDGLEHRELGHGQPEARGPAPLQQHPQVLLWEQQRLAGRLPRGSTGDTVLLPLAQGGHRPLSRAQSSPAAPASLSAPEPASQARVLSSSETPARTLPFTTGLIYDSVMLKHQCSCGDNSRHPEHAGRIQSIWSRLQERGLRSQCECLRGRKASLEELQSVHSERHVLLYGTNPLSRLKLDNGKLAGLLAQRMFVMLPCGGVGVDTDTIWNELHSSNAARWAAGSVTDLAFKVASRELKNGFAVVRPPGHHADHSTAMGFCFFNSVAIACRQLQQQSKASKILIVDWDVHHGNGTQQTFYQDPSVLYISLHRHDDGNFFPGSGAVDEVGAGSGEGFNVNVAWAGGLDPPMGDPEYLAAFRIVVMPIAREFSPDLVLVSAGFDAAEGHPAPLGGYHVSAKCFGYMTQQLMNLAGGAVVLALEGGHDLTAICDASEACVAALLGNRVDPLSEEGWKQKPNLNAIRSLEAVIRVHSKYWGCMQRLASCPDSWVPRVPGADKEEVEAVTALASLSVGILAEDRPSEQLVEEEEPMNL.

Transcription repression regions lie at residues 1 to 268 (MDLR…DSDR) and 218 to 546 (GPNP…EHAG). Positions 49–149 (SMDTPMPELQ…LPSDPPEHFP (101 aa)) are interaction with MEF2A. Ser109 bears the Phosphoserine mark. 2 disordered regions span residues 130–224 (LSSF…PILG) and 261–283 (PARA…ILGS). The residue at position 155 (Ser155) is a Phosphoserine; by MARK2, MARK3 and PKD/PRKD1. Positions 167-181 (KSLERRKNPLLRKES) are enriched in basic and acidic residues. Ser181 is subject to Phosphoserine; by PKD/PRKD2. Low complexity predominate over residues 197–212 (SSPSSSSTPASGCSSP). The residue at position 283 (Ser283) is a Phosphoserine. At Thr286 the chain carries Phosphothreonine. Disordered regions lie at residues 349-377 (LHWP…MQPR), 389-441 (KRSA…GPAP), and 460-510 (LPRG…SSSE). Ser358 is modified (phosphoserine; by PKD/PRKD1). Over residues 360 to 374 (PLPPSATAPPPPGPM) the composition is skewed to pro residues. 5 positions are modified to phosphoserine: Ser364, Ser405, Ser486, Ser487, and Ser507. Residues 482–503 (SRAQSSPAAPASLSAPEPASQA) are compositionally biased toward low complexity. Residues 512 to 865 (PARTLPFTTG…VAALLGNRVD (354 aa)) are histone deacetylase. Residues Cys533, Cys535, and His541 each coordinate Zn(2+). Phosphoserine is present on Ser595. Cys618 contacts Zn(2+). Residue His670 is part of the active site. The interaction with SIN3A stretch occupies residues 877–952 (NLNAIRSLEA…LVEEEEPMNL (76 aa)). Positions 917-952 (KEEVEAVTALASLSVGILAEDRPSEQLVEEEEPMNL) match the Nuclear export signal motif.

This sequence belongs to the histone deacetylase family. HD type 2 subfamily. Interacts with HDAC1, HDAC2, HDAC3, HDAC4, HDAC5, NCOR1, NCOR2, SIN3A, SIN3B, RBBP4, RBBP7, MTA1L1, SAP30 and MBD3. Interacts with KAT5 and EDNRA. Interacts with the 14-3-3 protein YWHAE, MEF2A, MEF2B and MEF2C. Interacts with ZMYND15. Interacts with KDM5B. Interacts with PML. Interacts with FOXP3. Interacts with RARA. In terms of processing, may be phosphorylated by CaMK1. Phosphorylated by the PKC kinases PKN1 and PKN2, impairing nuclear import. Phosphorylation at Ser-155 by MARK2, MARK3 and PRKD1 promotes interaction with 14-3-3 proteins and export from the nucleus. Phosphorylation at Ser-155 is a prerequisite for phosphorylation at Ser-181.

The protein localises to the nucleus. It localises to the cytoplasm. The catalysed reaction is N(6)-acetyl-L-lysyl-[histone] + H2O = L-lysyl-[histone] + acetate. It carries out the reaction N(6)-acetyl-L-lysyl-[protein] + H2O = L-lysyl-[protein] + acetate. In terms of biological role, responsible for the deacetylation of lysine residues on the N-terminal part of the core histones (H2A, H2B, H3 and H4). Histone deacetylation gives a tag for epigenetic repression and plays an important role in transcriptional regulation, cell cycle progression and developmental events. Histone deacetylases act via the formation of large multiprotein complexes. Involved in muscle maturation by repressing transcription of myocyte enhancer factors such as MEF2A, MEF2B and MEF2C. During muscle differentiation, it shuttles into the cytoplasm, allowing the expression of myocyte enhancer factors. May be involved in Epstein-Barr virus (EBV) latency, possibly by repressing the viral BZLF1 gene. Positively regulates the transcriptional repressor activity of FOXP3. Serves as a corepressor of RARA, causing its deacetylation and inhibition of RARE DNA element binding. In association with RARA, plays a role in the repression of microRNA-10a and thereby in the inflammatory response. Also acetylates non-histone proteins, such as ALKBH5. This Homo sapiens (Human) protein is Histone deacetylase 7 (HDAC7).